The following is a 436-amino-acid chain: MMRARVPLLLLGILFLASLSASFATSLREEEESQDNPFYFNSDNSWNTLFKNQYGHIRVLQRFDQQSKRLQNLEDYRLVEFRSKPETLLLPQQADAELLLVVRSGSAILVLVKPDDRREYFFLTQGDNPIFSDNQKIPAGTIFYLVNPDPKEDLRIIQLAMPVNNPQIHEFFLSSTEAQQSYLQEFSKHILEASFNSKFEEINRVLFEEEGQQEEGQQEGVIVNIDSEQIEELSKHAKSSSRKSHSKQDNTIGNEFGNLTERTDNSLNVLISSIEMKEGALFVPHYYSKAIVILVVNEGEAHVELVGPKGNKETLEFESYRAELSKDDVFVIPAAYPVAIKATSNVNFTGFGINANNNNRNLLAGKTDNVISSIGRALDGKDVLGLTFSGSGEEVMKLINKQSGSYFVDGHHHQQEQQKGSHQQEQQKGRKGAFVY.

The signal sequence occupies residues 1 to 24 (MMRARVPLLLLGILFLASLSASFA). The interval 233–257 (LSKHAKSSSRKSHSKQDNTIGNEFG) is disordered. The segment covering 236 to 245 (HAKSSSRKSH) has biased composition (basic residues). Residues 245 to 396 (HSKQDNTIGN…TFSGSGEEVM (152 aa)) form the Cupin type-1 domain. N-linked (GlcNAc...) (complex) asparagine; alternate glycosylation is present at Asn258. N-linked (GlcNAc...) (high mannose) asparagine; alternate glycosylation is present at Asn258. N-linked (GlcNAc...) (high mannose) asparagine glycosylation is present at Asn347. The tract at residues 411 to 436 (HHHQQEQQKGSHQQEQQKGRKGAFVY) is disordered. Low complexity predominate over residues 417 to 426 (QQKGSHQQEQ).

It belongs to the 7S seed storage protein family. Homotrimer. N-glycosylated; glycans consist in Man9(GlcNAc)2 and Man7(GlcNAc)2 when dually glycosylated at Asn-258 and Asn-347, whereas it consists in Xyl-Man3(GlcNAc)2 when solely glycosylated at Asn-258.

The protein localises to the vacuole. It is found in the aleurone grain. In terms of biological role, major seed storage protein. This Phaseolus vulgaris (Kidney bean) protein is Phaseolin, alpha-type.